The primary structure comprises 122 residues: Large ribosomal subunit protein uL14c (122 aa).

Belongs to the universal ribosomal protein uL14 family. In terms of assembly, part of the 50S ribosomal subunit.

Its subcellular location is the plastid. It localises to the chloroplast. In terms of biological role, binds to 23S rRNA. The sequence is that of Large ribosomal subunit protein uL14c from Oenothera biennis (German evening primrose).